We begin with the raw amino-acid sequence, 613 residues long: Laccase 1 (613 aa).

The first 20 residues, 1-20 (MSRFARLLLIVALFFTNAWA), serve as a signal peptide directing secretion. Plastocyanin-like domains follow at residues 29–142 (ITWK…IRPK) and 171–359 (YLVV…MRIP). N-linked (GlcNAc...) asparagine glycosylation is present at Asn74. 4 residues coordinate Cu cation: His78, His80, His122, and His124. N-linked (GlcNAc...) asparagine glycans are attached at residues Asn256, Asn279, Asn444, Asn468, and Asn484. A Plastocyanin-like 3 domain is found at 468 to 598 (NATRDTENDG…GGMGIAILDG (131 aa)). His506, His509, and His511 together coordinate Cu cation. An N-linked (GlcNAc...) asparagine glycan is attached at Asn526. The Cu cation site is built by His580, Cys581, His582, and His586.

This sequence belongs to the multicopper oxidase family. Cu cation serves as cofactor.

The protein resides in the cell surface. It participates in pigment biosynthesis. Its function is as follows. Laccase; part of the Pks1 gene cluster that mediates the biosynthesis of an anthraquinone derivative pigment that contributes to conidial pigmentation that provides protection from UV radiation, heat and cold stress. The polyketide synthase Pks1 produces 1-acetyl-2,4,6,8-tetrahydroxy-9,10-anthraquinone though condensation of acetyl-CoA with malonyl-CoA. The dehydratase EthD and the laccase Mlac1 further convert the anthraquinone derivative into the final conidial pigment. The sequence is that of Laccase 1 from Metarhizium robertsii (strain ARSEF 23 / ATCC MYA-3075) (Metarhizium anisopliae (strain ARSEF 23)).